Here is an 84-residue protein sequence, read N- to C-terminus: Putative membrane protein insertion efficiency factor (84 aa).

It belongs to the UPF0161 family.

It localises to the cell inner membrane. In terms of biological role, could be involved in insertion of integral membrane proteins into the membrane. The polypeptide is Putative membrane protein insertion efficiency factor (Shewanella amazonensis (strain ATCC BAA-1098 / SB2B)).